Consider the following 962-residue polypeptide: Rho GTPase-activating protein syd-1 (962 aa).

3 disordered regions span residues 231-367 (GKKS…MRSD), 397-419 (PRTL…RIMT), and 437-471 (CGEE…NGSP). Composition is skewed to polar residues over residues 243-261 (NATT…SSPR), 323-345 (SFNS…SSTA), 401-412 (RQPNDSNKSNSL), and 453-471 (PPFS…NGSP). The region spanning 572 to 696 (RAAGPGINVD…NDDRVFALNL (125 aa)) is the C2 domain. The Rho-GAP domain occupies 729-923 (VPLGRLVQRE…LDMNQASSSL (195 aa)). Over residues 934–947 (VNSESGSDSPATSG) the composition is skewed to polar residues. The tract at residues 934 to 962 (VNSESGSDSPATSGQKGGGGVSYVSESQC) is disordered.

It localises to the synapse. Functionally, probable GTPase activator for the Rho-type GTPases by converting them to an inactive GDP-bound state. Regulates the localization and assembly of presynaptic components during presynaptic development and is required for specifying the identity of axons during initial polarity acquisition. In these roles it is thought to act cell autonomously downstream of syg-1 and syg-2 and upstream of syd-2, possibly as a positive regulator of the latter. Required for the control of movement, egg-laying and the correct localization of elks-1. This Caenorhabditis briggsae protein is Rho GTPase-activating protein syd-1.